The sequence spans 258 residues: Chymotrypsin-like elastase family member 1 (258 aa).

An N-terminal signal peptide occupies residues 1 to 8 (MLVLYGHS). The propeptide at 9–18 (TQDVPETNAR) is activation peptide. Residues 19–256 (VVGGTEARRN…YITWINNVIA (238 aa)) form the Peptidase S1 domain. An intrachain disulfide couples Cys-48 to Cys-64. His-63 (charge relay system) is an active-site residue. Residues Glu-77, Asn-79, Gln-82, and Glu-87 each coordinate Ca(2+). The N-linked (GlcNAc...) asparagine glycan is linked to Asn-79. The Charge relay system role is filled by Asp-111. Disulfide bonds link Cys-145–Cys-212, Cys-176–Cys-192, and Cys-202–Cys-232. Ser-206 acts as the Charge relay system in catalysis. Asn-233 carries N-linked (GlcNAc...) asparagine glycosylation.

This sequence belongs to the peptidase S1 family. Elastase subfamily. Requires Ca(2+) as cofactor.

It localises to the secreted. It catalyses the reaction Hydrolysis of proteins, including elastin. Preferential cleavage: Ala-|-Xaa.. In terms of biological role, serine proteases that hydrolyze many proteins in addition to elastin. This is Chymotrypsin-like elastase family member 1 (CELA1) from Canis lupus familiaris (Dog).